Reading from the N-terminus, the 357-residue chain is Peptide chain release factor 1 (357 aa).

Q234 bears the N5-methylglutamine mark. The tract at residues 282-313 is disordered; sequence DSKKQEQRSNNRKQQVGSGDRSERIRTYNFPQ.

It belongs to the prokaryotic/mitochondrial release factor family. In terms of processing, methylated by PrmC. Methylation increases the termination efficiency of RF1.

The protein resides in the cytoplasm. Its function is as follows. Peptide chain release factor 1 directs the termination of translation in response to the peptide chain termination codons UAG and UAA. The protein is Peptide chain release factor 1 of Borreliella afzelii (strain PKo) (Borrelia afzelii).